Here is a 396-residue protein sequence, read N- to C-terminus: 1-deoxy-D-xylulose 5-phosphate reductoisomerase (396 aa).

Thr13, Gly14, Ser15, Ile16, and Asn127 together coordinate NADPH. Lys128 contacts 1-deoxy-D-xylulose 5-phosphate. Glu129 lines the NADPH pocket. Asp153 provides a ligand contact to Mn(2+). The 1-deoxy-D-xylulose 5-phosphate site is built by Ser154, Glu155, Ser184, and His207. Glu155 serves as a coordination point for Mn(2+). Gly213 provides a ligand contact to NADPH. 1-deoxy-D-xylulose 5-phosphate contacts are provided by Ser220, Asn225, Lys226, and Glu229. Glu229 serves as a coordination point for Mn(2+).

The protein belongs to the DXR family. Requires Mg(2+) as cofactor. The cofactor is Mn(2+).

It carries out the reaction 2-C-methyl-D-erythritol 4-phosphate + NADP(+) = 1-deoxy-D-xylulose 5-phosphate + NADPH + H(+). Its pathway is isoprenoid biosynthesis; isopentenyl diphosphate biosynthesis via DXP pathway; isopentenyl diphosphate from 1-deoxy-D-xylulose 5-phosphate: step 1/6. Inhibited by fosmidomycin and 3-(N-acetyl-N-hydroxyamino)-propylphosphonic acid (FR-900098). Functionally, catalyzes the NADPH-dependent rearrangement and reduction of 1-deoxy-D-xylulose-5-phosphate (DXP) to 2-C-methyl-D-erythritol 4-phosphate (MEP). This is 1-deoxy-D-xylulose 5-phosphate reductoisomerase from Pseudomonas aeruginosa (strain ATCC 15692 / DSM 22644 / CIP 104116 / JCM 14847 / LMG 12228 / 1C / PRS 101 / PAO1).